The chain runs to 126 residues: MAVPSELKYSKEHEWVKVEGNTVTIGITEYAQGELGDIVFVELPEVDDEINEGDTFGSVESVKTVSELYAPVSGKVVESNEELEDSPEFVNESPYEKAWMVKVELSDESQLDDLLSADQYKEMIGE.

Residues threonine 22 to glutamate 104 enclose the Lipoyl-binding domain. Lysine 63 bears the N6-lipoyllysine mark.

The protein belongs to the GcvH family. In terms of assembly, the glycine cleavage system is composed of four proteins: P, T, L and H. It depends on (R)-lipoate as a cofactor.

Its function is as follows. The glycine cleavage system catalyzes the degradation of glycine. The H protein shuttles the methylamine group of glycine from the P protein to the T protein. Functionally, is also involved in protein lipoylation via its role as an octanoyl/lipoyl carrier protein intermediate. The protein is Glycine cleavage system H protein of Staphylococcus haemolyticus (strain JCSC1435).